A 261-amino-acid chain; its full sequence is X-box-binding protein 1 (261 aa).

The Cytoplasmic portion of the chain corresponds to 1–185; the sequence is MVVVAAAPNP…VQAQLSPLQN (185 aa). The interval 44–93 is disordered; it reads RGASPEAASGGLPQARKRQRLTHLSPEEKALRRKLKNRVAAQTARDRKKA. S47 and S68 each carry phosphoserine. Residues 70 to 133 enclose the bZIP domain; that stretch reads EEKALRRKLK…HGLVVENQEL (64 aa). The tract at residues 72–94 is basic motif; the sequence is KALRRKLKNRVAAQTARDRKKAR. Residues 75 to 92 form a nuclear localization signal (NLS); in isoforms 1 and isoform 2 region; that stretch reads RRKLKNRVAAQTARDRKK. A leucine-zipper region spans residues 98 to 133; it reads LEQQVVDLEEENQKLLLENQLLREKTHGLVVENQEL. The helical; Signal-anchor for type II membrane protein transmembrane segment at 186–203 threads the bilayer; that stretch reads ISPWILAVLTLQIQSLIS. At 204-261 the chain is on the lumenal side; sequence CWAFWTTWTQSCSSNALPQSLPAWRSSQRSTQKDPVPYQPPFLCQWGRHQPSWKPLMN. The interval 235–261 is necessary for the translational pausing of its own mRNA; that stretch reads QKDPVPYQPPFLCQWGRHQPSWKPLMN.

Belongs to the bZIP family. Isoform 2 interacts with SIRT1. Isoform 2 interacts with PIK3R1 and PIK3R2; the interactions are direct and induce translocation of XBP1 isoform 2 into the nucleus and the unfolded protein response (UPR) XBP1-dependent target genes activation in a ER stress- and/or insulin-dependent but PI3K-independent manner. Isoform 2 interacts with FOXO1; the interaction is direct and leads to FOXO1 ubiquitination and degradation via the proteasome pathway in hepatocytes. Isoform 1 interacts with HM13. Isoform 1 interacts with RNF139; the interaction induces ubiquitination and degradation of isoform 1. Isoform 1 interacts (via luminal domain) with DERL1; the interaction obviates the need for ectodomain shedding prior HM13/SPP-mediated XBP1 isoform 1 cleavage. Isoform 1 interacts with isoform 2; the interaction sequesters isoform 2 from the nucleus and enhances isoform 2 degradation in the cytoplasm. Isoform 1 interacts with HDAC3 and AKT1; the interactions occur in endothelial cell (EC) under disturbed flow. Isoform 1 interacts with the oncoprotein FOS. Isoform 2 interacts with ATF6; the interaction occurs in a ER stress-dependent manner and is required for DNA binding to the unfolded protein response element (UPRE). Isoform 2 interacts with PIK3R1; the interaction is direct and induces translocation of XBP1 isoform 2 into the nucleus and the unfolded protein response (UPR) XBP1-dependent target genes activation in a ER stress- and/or insulin-dependent but PI3K-independent manner. Post-translationally, acetylated by EP300; acetylation positively regulates the transcriptional activity of XBP1 isoform 2. Isoform 2 is deacetylated by SIRT1; deacetylation negatively regulates the transcriptional activity of XBP1 isoform 2. In terms of processing, ubiquitinated, leading to proteasome-mediated degradation in response to ER stress. X-box-binding protein 1, cytoplasmic form and luminal form are produced by intramembrane proteolytic cleavage of ER membrane-anchored isoform 1 triggered by HM13/SPP in a DERL1-RNF139-dependent and VCP/p97-independent manner. X-box-binding protein 1, luminal form is ubiquitinated leading to proteasomal degradation. Expressed in plasma cells in rheumatoid synovium. Over-expressed in primary breast cancer and metastatic breast cancer cells. Isoform 1 and isoform 2 are expressed at higher level in proliferating as compared to confluent quiescent endothelial cells.

It is found in the endoplasmic reticulum. Its subcellular location is the nucleus. The protein resides in the cytoplasm. The protein localises to the endoplasmic reticulum membrane. It localises to the membrane. Functions as a transcription factor during endoplasmic reticulum (ER) stress by regulating the unfolded protein response (UPR). Required for cardiac myogenesis and hepatogenesis during embryonic development, and the development of secretory tissues such as exocrine pancreas and salivary gland. Involved in terminal differentiation of B lymphocytes to plasma cells and production of immunoglobulins. Modulates the cellular response to ER stress in a PIK3R-dependent manner. Binds to the cis-acting X box present in the promoter regions of major histocompatibility complex class II genes. Involved in VEGF-induced endothelial cell (EC) proliferation and retinal blood vessel formation during embryonic development but also for angiogenesis in adult tissues under ischemic conditions. Also functions as a major regulator of the UPR in obesity-induced insulin resistance and type 2 diabetes for the management of obesity and diabetes prevention. In terms of biological role, plays a role in the unconventional cytoplasmic splicing processing of its own mRNA triggered by the endoplasmic reticulum (ER) transmembrane endoribonuclease ERN1: upon ER stress, the emerging XBP1 polypeptide chain, as part of a mRNA-ribosome-nascent chain (R-RNC) complex, cotranslationally recruits its own unprocessed mRNA through transient docking to the ER membrane and translational pausing, therefore facilitating efficient IRE1-mediated XBP1 mRNA isoform 2 production. In endothelial cells (EC), associated with KDR, promotes IRE1-mediated XBP1 mRNA isoform 2 productions in a vascular endothelial growth factor (VEGF)-dependent manner, leading to EC proliferation and angiogenesis. Functions as a negative feed-back regulator of the potent transcription factor XBP1 isoform 2 protein levels through proteasome-mediated degradation, thus preventing the constitutive activation of the ER stress response signaling pathway. Inhibits the transactivation activity of XBP1 isoform 2 in myeloma cells. Acts as a weak transcriptional factor. Together with HDAC3, contributes to the activation of NFE2L2-mediated HMOX1 transcription factor gene expression in a PI(3)K/mTORC2/Akt-dependent signaling pathway leading to EC survival under disturbed flow/oxidative stress. Binds to the ER stress response element (ERSE) upon ER stress. Binds to the consensus 5'-GATGACGTG[TG]N(3)[AT]T-3' sequence related to cAMP responsive element (CRE)-like sequences. Binds the Tax-responsive element (TRE) present in the long terminal repeat (LTR) of T-cell leukemia virus type 1 (HTLV-I) and to the TPA response elements (TRE). Associates preferentially to the HDAC3 gene promoter region in a static flow-dependent manner. Binds to the CDH5/VE-cadherin gene promoter region. Its function is as follows. Functions as a stress-inducible potent transcriptional activator during endoplasmic reticulum (ER) stress by inducing unfolded protein response (UPR) target genes via binding to the UPR element (UPRE). Up-regulates target genes encoding ER chaperones and ER-associated degradation (ERAD) components to enhance the capacity of productive folding and degradation mechanism, respectively, in order to maintain the homeostasis of the ER under ER stress. Plays a role in the production of immunoglobulins and interleukin-6 in the presence of stimuli required for plasma cell differentiation. Induces phospholipid biosynthesis and ER expansion. Contributes to the VEGF-induced endothelial cell (EC) growth and proliferation in a Akt/GSK-dependent and/or -independent signaling pathway, respectively, leading to beta-catenin nuclear translocation and E2F2 gene expression. Promotes umbilical vein EC apoptosis and atherosclerotisis development in a caspase-dependent signaling pathway, and contributes to VEGF-induced EC proliferation and angiogenesis in adult tissues under ischemic conditions. Involved in the regulation of endostatin-induced autophagy in EC through BECN1 transcriptional activation. Plays a role as an oncogene by promoting tumor progression: stimulates zinc finger protein SNAI1 transcription to induce epithelial-to-mesenchymal (EMT) transition, cell migration and invasion of breast cancer cells. Involved in adipocyte differentiation by regulating lipogenic gene expression during lactation. Plays a role in the survival of both dopaminergic neurons of the substantia nigra pars compacta (SNpc), by maintaining protein homeostasis and of myeloma cells. Increases insulin sensitivity in the liver as a response to a high carbohydrate diet, resulting in improved glucose tolerance. Also improves glucose homeostasis in an ER stress- and/or insulin-independent manner through both binding and proteasome-induced degradation of the transcription factor FOXO1, hence resulting in suppression of gluconeogenic genes expression and in a reduction of blood glucose levels. Controls the induction of de novo fatty acid synthesis in hepatocytes by regulating the expression of a subset of lipogenic genes in an ER stress- and UPR-independent manner. Associates preferentially to the HDAC3 gene promoter region in a disturbed flow-dependent manner. Binds to the BECN1 gene promoter region. Binds to the CDH5/VE-cadherin gene promoter region. Binds to the ER stress response element (ERSE) upon ER stress. Binds to the 5'-CCACG-3' motif in the PPARG promoter. The chain is X-box-binding protein 1 from Homo sapiens (Human).